A 348-amino-acid chain; its full sequence is Selenide, water dikinase (348 aa).

Cysteine 17 is an active-site residue. ATP-binding positions include lysine 20 and 47 to 49 (RAD). Aspartate 50 is a Mg(2+) binding site. ATP contacts are provided by residues aspartate 67, aspartate 90, and 138–140 (GHT). Aspartate 90 is a binding site for Mg(2+). Position 226 (aspartate 226) interacts with Mg(2+).

This sequence belongs to the selenophosphate synthase 1 family. Class I subfamily. Homodimer. Requires Mg(2+) as cofactor.

It catalyses the reaction hydrogenselenide + ATP + H2O = selenophosphate + AMP + phosphate + 2 H(+). Its function is as follows. Synthesizes selenophosphate from selenide and ATP. The protein is Selenide, water dikinase of Pelobacter propionicus (strain DSM 2379 / NBRC 103807 / OttBd1).